A 794-amino-acid chain; its full sequence is uncharacterized protein (794 aa).

A signal peptide spans 1-22 (MKLKYGTIIFSGLLGVSAILAA). Residue C23 is the site of N-palmitoyl cysteine attachment. C23 carries S-diacylglycerol cysteine lipidation. Positions 177 to 196 (SSGKTQVSQTSSGSNQQKTL) are enriched in polar residues. 3 disordered regions span residues 177-208 (SSGKTQVSQTSSGSNQQKTLQKPLKIDTSDSS), 220-257 (AKNNGKKANNSKSNRRSTDQSTQTHNDQGDASESDKKI), and 466-506 (KSTD…ENNS). Positions 220–231 (AKNNGKKANNSK) are enriched in low complexity. Positions 238-250 (DQSTQTHNDQGDA) are enriched in polar residues.

It belongs to the MG185/MG260 family.

The protein resides in the cell membrane. This is an uncharacterized protein from Mycoplasma pneumoniae (strain ATCC 29342 / M129 / Subtype 1) (Mycoplasmoides pneumoniae).